Here is a 607-residue protein sequence, read N- to C-terminus: Vacuolar fusion protein MON1 homolog (607 aa).

Low complexity predominate over residues 1–14; the sequence is MATSDSRSSPSSSD. Disordered stretches follow at residues 1 to 173 and 463 to 486; these read MATS…DDAS and PIDRRRRSSTTNQEQDSPGPDISV. Residues 21 to 55 show a composition bias toward polar residues; the sequence is NPSSDPETNSERVQSQLESMNLSQPSEVSDGSHTE.

Belongs to the MON1/SAND family. Interacts with CCZ1A, CCZ1B and RABF2B. As to expression, widely expressed at stable levels.

The protein resides in the endosome. It is found in the prevacuolar compartment. Plays an important role in membrane trafficking through the secretory apparatus. In complex with CCZ1, acts as a guanine exchange factor (GEF) for RABG3F of the Rab7 protein family. Promotes the exchange of GDP to GTP, converting RABG3F from an inactive GDP-bound form into an active GTP-bound form. The RABG3F active form is involved in protein trafficking from prevacuolar compartments (PVCs) to vacuoles. May serve as a linker between Rab5 and Rab7 protein families in PVCs and mediate PVC maturation. This is Vacuolar fusion protein MON1 homolog from Arabidopsis thaliana (Mouse-ear cress).